The primary structure comprises 200 residues: Cytochrome c biogenesis ATP-binding export protein CcmA (200 aa).

The ABC transporter domain maps to 2–200 (LDVIELDFDY…NKADYEEYHL (199 aa)). Residue 34–41 (GSNGAGKT) coordinates ATP.

Belongs to the ABC transporter superfamily. CcmA exporter (TC 3.A.1.107) family. In terms of assembly, the complex is composed of two ATP-binding proteins (CcmA) and two transmembrane proteins (CcmB).

The protein resides in the cell inner membrane. It carries out the reaction heme b(in) + ATP + H2O = heme b(out) + ADP + phosphate + H(+). In terms of biological role, part of the ABC transporter complex CcmAB involved in the biogenesis of c-type cytochromes; once thought to export heme, this seems not to be the case, but its exact role is uncertain. Responsible for energy coupling to the transport system. This Legionella pneumophila protein is Cytochrome c biogenesis ATP-binding export protein CcmA.